The chain runs to 256 residues: Aspirochlorine biosynthesis protein F (256 aa).

Residue Asn19 is glycosylated (N-linked (GlcNAc...) asparagine). A run of 3 helical transmembrane segments spans residues 21 to 41 (SITPHLLLVGAQILFLSGPHF), 163 to 183 (LVWVLLMTDLVSQMMLRFFFT), and 214 to 234 (FGLGPYFFINMQYLVVSILAV).

Its subcellular location is the membrane. Its pathway is mycotoxin biosynthesis. Part of the gene cluster that mediates the biosynthesis of aspirochlorine (or antibiotic A30641), an unusual halogenated spiro compound with distinctive antifungal properties due to selective inhibition of protein biosynthesis, and which is also active against bacteria, viruses, and murine tumor cells. The non-ribosomal peptide synthetase (NRPS) aclP is responsible the formation of the diketopiperazine (DKP) core from the condensation of 2 phenylalanine residues. One Phe residue is tailored into chlorotyrosine by hydroxylation and chlorination, whereas the second Phe undergoes an unprecedented C-C bond cleavage to be converted into glycine. After formation of the DKP, sulfur is incorporated into the DKP by conjugation with glutathione by aclG, followed by its stepwise degradation to the thiol by aclI, aclJ and aclK, and the dithiol oxidation by aclT. In addition, oxygenases (aclB, aclC, aclL and aclO) and O-methyltransferases (aclM and aclU) act as tailoring enzymes to produce the intermediate dechloroaspirochlorine. Ultimately, chlorination of dechloroaspirochlorine by the halogenase aclH is the last step in the aspirochlorine pathway. This Aspergillus oryzae (strain ATCC 42149 / RIB 40) (Yellow koji mold) protein is Aspirochlorine biosynthesis protein F.